Reading from the N-terminus, the 118-residue chain is Large ribosomal subunit protein bL20 (118 aa).

This sequence belongs to the bacterial ribosomal protein bL20 family.

Its function is as follows. Binds directly to 23S ribosomal RNA and is necessary for the in vitro assembly process of the 50S ribosomal subunit. It is not involved in the protein synthesizing functions of that subunit. The polypeptide is Large ribosomal subunit protein bL20 (Desulfotalea psychrophila (strain LSv54 / DSM 12343)).